A 594-amino-acid chain; its full sequence is SHC-transforming protein 3 (594 aa).

The tract at residues Gly-98–Gln-147 is disordered. Residues Ser-101–Ala-124 show a composition bias toward low complexity. The PID domain occupies Leu-149–Gly-334. The tract at residues Asp-335–Thr-498 is CH1. Disordered regions lie at residues Pro-351–Ala-373 and Gly-386–Ile-405. The span at Trp-393–Ile-405 shows a compositional bias: polar residues. Ser-402 carries the phosphoserine modification. The 92-residue stretch at Trp-499–Val-590 folds into the SH2 domain.

Interacts with the Trk receptors in a phosphotyrosine-dependent manner. Once activated, binds to GRB2. Interacts with activated EGF receptors. Tyrosine phosphorylated. Mainly expressed in brain. Hardly detectable in other tissues, except in pancreas. Highly expressed in the cerebral cortex, frontal and temporal lobes, occipital pole, hippocampus, caudate nucleus and amygdala. Expressed at low level in the cerebellum, medulla and spinal cord.

Signaling adapter that couples activated growth factor receptors to signaling pathway in neurons. Involved in the signal transduction pathways of neurotrophin-activated Trk receptors in cortical neurons. The sequence is that of SHC-transforming protein 3 (SHC3) from Homo sapiens (Human).